A 1820-amino-acid chain; its full sequence is Sodium channel protein (1820 aa).

Residues 1–117 lie on the Cytoplasmic side of the membrane; that stretch reads MARKFSSARP…FNPIRRGAIR (117 aa). One copy of the I repeat lies at 108 to 410; it reads FNPIRRGAIR…VAMAYEEQNQ (303 aa). The chain crosses the membrane as a helical span at residues 118–138; it reads VFVNSAFNFFIMFTIFSNCIF. Topologically, residues 139 to 149 are extracellular; sequence MTISNPPAWSK. The helical transmembrane segment at 150–171 threads the bilayer; that stretch reads IVEYTFTGIYTFEVIVKVLSRG. At 172 to 176 the chain is on the cytoplasmic side; it reads FCIGH. A helical membrane pass occupies residues 177 to 197; the sequence is FTFLRDPWNWLDFSVVTMTYI. Over 198 to 203 the chain is Extracellular; that stretch reads TEFIDL. The helical; Voltage-sensor transmembrane segment at 204 to 224 threads the bilayer; it reads RNVSALRTFRVLRALKTITIF. The Cytoplasmic segment spans residues 225-243; it reads PGLKTIVRALIESMKQMGD. Residues 244-264 form a helical membrane-spanning segment; sequence VVILTVFSLAVFTLAGMQLFM. The Extracellular portion of the chain corresponds to 265–346; sequence GNLRHKCIRW…PNYGYTNYDN (82 aa). C271 and C324 are joined by a disulfide. N-linked (GlcNAc...) asparagine glycans are attached at residues N278, N288, and N317. The non-homologous region of repeat I stretch occupies residues 285–342; the sequence is SAYNTTFDFTAYIENEENQYFLDGALDALLCGNNSDAGKCPEGYTCMKAGRNPNYGYT. Residues 347–371 constitute an intramembrane region (pore-forming); sequence FAWTFLCLFRLMLQDYWENLYQMTL. Over 372 to 378 the chain is Extracellular; it reads RAAGKSY. A helical membrane pass occupies residues 379–402; sequence MVFFIMVIFLGSFYLINLILAVVA. Over 403–557 the chain is Cytoplasmic; that stretch reads MAYEEQNQAT…CCGPWVFLKK (155 aa). The interval 483 to 507 is disordered; sequence SVKLSTEEQRSDSKSMDSKHSVDKP. Residues 487 to 507 show a composition bias toward basic and acidic residues; sequence STEEQRSDSKSMDSKHSVDKP. One copy of the II repeat lies at 548-811; sequence CCGPWVFLKK…EEDDEVNSLQ (264 aa). A helical membrane pass occupies residues 558 to 578; the sequence is WVHFVMMDPFTDLFITLCIIL. Over 579 to 599 the chain is Extracellular; it reads NTLFMSIEHHPMNESFQSLLS. Residue N591 is glycosylated (N-linked (GlcNAc...) asparagine). A helical transmembrane segment spans residues 600 to 620; it reads AGNLVFTTIFAAEMVLKIIAL. The Cytoplasmic segment spans residues 621-625; the sequence is DPYYY. A helical transmembrane segment spans residues 626–643; the sequence is FQQTWNIFDSIIVSLSLL. Residues 644–650 lie on the Extracellular side of the membrane; the sequence is ELGLSNM. A helical; Voltage-sensor membrane pass occupies residues 651-671; the sequence is QGMSVLRSLRLLRIFKLAKSW. At 672 to 690 the chain is on the cytoplasmic side; the sequence is PTLNILIKIICNSVGALGN. Residues 691–711 form a helical membrane-spanning segment; it reads LTIVLAIIVFIFALVGFQLFG. The Extracellular portion of the chain corresponds to 712–734; that stretch reads KNYKEYVCKISDDCELPRWHMND. The pore-forming intramembrane region spans 735–755; sequence FFHSFLIVFRALCGEWIETMW. Topologically, residues 756 to 766 are extracellular; sequence DCMEVGGVPMC. C757 and C766 are disulfide-bonded. Residues 767 to 790 traverse the membrane as a helical segment; the sequence is LAVYMMVIIIGNLVMLNLFLALLL. Residues 791 to 1004 lie on the Cytoplasmic side of the membrane; it reads SSFSSDNLSS…TIVEHDYFET (214 aa). 2 disordered regions span residues 844–864 and 891–959; these read PPSDDVVGEEGDNEGKKDTLP and VKGE…SKDP. Acidic residues predominate over residues 896–910; sequence EIEEEGLVDSSDEED. Residues 924-935 show a composition bias toward polar residues; that stretch reads SVCSTVDYSPSE. A compositionally biased stretch (acidic residues) spans 942–953; sequence EEEEEEEEEPEE. One copy of the III repeat lies at 988–1295; it reads NLRRTCYTIV…KKYYNAMKKL (308 aa). A helical membrane pass occupies residues 1005 to 1025; it reads FIIFMILLSSGVLAFEDIYIW. Topologically, residues 1026-1037 are extracellular; sequence RRRVIKVILEYA. A helical transmembrane segment spans residues 1038-1058; it reads DKVFTYVFIVEMLLKWVAYGF. At 1059-1065 the chain is on the cytoplasmic side; it reads KRYFTDA. Residues 1066–1086 form a helical membrane-spanning segment; that stretch reads WCWLDFVIVGASIMGITSSLL. Residues 1087–1091 lie on the Extracellular side of the membrane; that stretch reads GYEEL. Residues 1092–1112 form a helical; Voltage-sensor membrane-spanning segment; the sequence is GAIKNLRTIRALRPLRALSRF. Topologically, residues 1113–1131 are cytoplasmic; that stretch reads EGMKVVVRALLGAIPSIMN. Residues 1132–1152 traverse the membrane as a helical segment; sequence VLLVCLMFWLIFSIMGVNLFA. Residues 1153 to 1199 lie on the Extracellular side of the membrane; that stretch reads GKFYRCINTTTDEILPVEEVNNRSDCMALMYTNEVRWVNLKVNYDNA. Residues N1160 and N1174 are each glycosylated (N-linked (GlcNAc...) asparagine). The interval 1172–1194 is non-homologous region of repeat III; it reads VNNRSDCMALMYTNEVRWVNLKV. The pore-forming intramembrane region spans 1200–1221; that stretch reads GMGYLSLLQVSTFKGWMDIMYA. The Extracellular segment spans residues 1222–1243; that stretch reads AVDSREVEDQPIYEINVYMYLY. The helical transmembrane segment at 1244–1264 threads the bilayer; sequence FVIFIVFGAFFTLNLFIGVII. Topologically, residues 1265–1320 are cytoplasmic; sequence DNFNRQKQKLGGEDLFMTEEQKKYYNAMKKLGSKKAAKCIPRPSNVVQGVVYDIVT. One copy of the IV repeat lies at 1304 to 1602; it reads IPRPSNVVQG…WHKFDVHGTQ (299 aa). Residues 1321–1341 traverse the membrane as a helical segment; that stretch reads QPFTDIFIMALICINMVAMMV. The Extracellular segment spans residues 1342–1352; the sequence is ESEDQSQVKKD. Residues 1353–1376 traverse the membrane as a helical segment; that stretch reads ILSQINVIFVIIFTVECLLKLLAL. Residues 1377 to 1380 lie on the Cytoplasmic side of the membrane; it reads RQYF. A helical membrane pass occupies residues 1381–1398; sequence FTVGWNVFDFAVVVISII. The Extracellular portion of the chain corresponds to 1399–1416; that stretch reads GLLLSDIIEKYFVSPTLF. Residues 1417-1437 form a helical; Voltage-sensor membrane-spanning segment; that stretch reads RVIRLARIARVLRLIRAAKGI. The Cytoplasmic segment spans residues 1438–1453; it reads RTLLFALMMSLPALFN. The chain crosses the membrane as a helical span at residues 1454-1474; sequence IGLLLFLIMFIFSIFGMSNFA. Over 1475 to 1490 the chain is Extracellular; it reads YVKKQGGVDDIFNFET. Residues 1490–1505 form a non-homologous region of repeat IV region; it reads TFGNSMICLFEITTSA. The pore-forming intramembrane region spans 1491-1513; it reads FGNSMICLFEITTSAGWDGLLLP. The Extracellular segment spans residues 1514–1543; sequence TLNTGPPDCDPDVENPGTDVRGNCGNPGKG. A helical membrane pass occupies residues 1544 to 1567; sequence ITFFCSYIILSFLVVVNMYIAIIL. Residues 1568-1820 are Cytoplasmic-facing; that stretch reads ENFGVAQEES…GAIVVRESIV (253 aa).

The protein belongs to the sodium channel (TC 1.A.1.10) family.

The protein localises to the cell membrane. Mediates the voltage-dependent sodium ion permeability of excitable membranes. Assuming opened or closed conformations in response to the voltage difference across the membrane, the protein forms a sodium-selective channel through which Na(+) ions may pass in accordance with their electrochemical gradient. The polypeptide is Sodium channel protein (Electrophorus electricus (Electric eel)).